The chain runs to 687 residues: DNA ligase (687 aa).

Residues 34 to 38 (DAEYD), 83 to 84 (SL), and E117 each bind NAD(+). K119 functions as the N6-AMP-lysine intermediate in the catalytic mechanism. NAD(+) is bound by residues R140, E182, K298, and K322. The Zn(2+) site is built by C416, C419, C434, and C439. The 79-residue stretch at 609–687 (EARGPFAGKT…EEEFVRLLKE (79 aa)) folds into the BRCT domain.

It belongs to the NAD-dependent DNA ligase family. LigA subfamily. The cofactor is Mg(2+). It depends on Mn(2+) as a cofactor.

The enzyme catalyses NAD(+) + (deoxyribonucleotide)n-3'-hydroxyl + 5'-phospho-(deoxyribonucleotide)m = (deoxyribonucleotide)n+m + AMP + beta-nicotinamide D-nucleotide.. Functionally, DNA ligase that catalyzes the formation of phosphodiester linkages between 5'-phosphoryl and 3'-hydroxyl groups in double-stranded DNA using NAD as a coenzyme and as the energy source for the reaction. It is essential for DNA replication and repair of damaged DNA. This Anaeromyxobacter sp. (strain K) protein is DNA ligase.